Here is a 234-residue protein sequence, read N- to C-terminus: Triosephosphate isomerase (234 aa).

A substrate-binding site is contributed by 8 to 10; that stretch reads NFK. His-90 serves as the catalytic Electrophile. Glu-159 acts as the Proton acceptor in catalysis. Substrate contacts are provided by Gly-165 and Ser-197.

This sequence belongs to the triosephosphate isomerase family. Homodimer.

The protein resides in the cytoplasm. It carries out the reaction D-glyceraldehyde 3-phosphate = dihydroxyacetone phosphate. The protein operates within carbohydrate biosynthesis; gluconeogenesis. It functions in the pathway carbohydrate degradation; glycolysis; D-glyceraldehyde 3-phosphate from glycerone phosphate: step 1/1. In terms of biological role, involved in the gluconeogenesis. Catalyzes stereospecifically the conversion of dihydroxyacetone phosphate (DHAP) to D-glyceraldehyde-3-phosphate (G3P). This Helicobacter pylori (strain Shi470) protein is Triosephosphate isomerase.